Reading from the N-terminus, the 211-residue chain is Bcl-2 homologous antagonist/killer (211 aa).

Residues 1–28 form a disordered region; that stretch reads MASGQGPGPPRQECGEPALPSASEEQVA. Ala-2 bears the N-acetylalanine mark. The short motif at 74–88 is the BH3 element; sequence VGRQLAIIGDDINRR. The short motif at 117–136 is the BH1 element; sequence SLFESGINWGRVVALLGFGY. Zn(2+) contacts are provided by Asp-160 and His-164. Positions 169–184 match the BH2 motif; that stretch reads RWIAQRGGWVAALNLG. A helical transmembrane segment spans residues 188 to 205; sequence ILNVLVVLGVVLLGQFVV.

The protein belongs to the Bcl-2 family. Homodimer. Formation of the homodimer is zinc-dependent. Forms heterodimers with BCL2 and BCL2L1 isoform Bcl-X(L). Forms heterooligomers with BAX. Interacts with BCL2A1. Interacts with RTL10/BOP. Interacts with VDAC1. Interacts with GIMAP3/IAN4 and GIMAP5/IAN5. As to quaternary structure, (Microbial infection) Interacts with vaccinia virus protein F1. In terms of assembly, (Microbial infection) Interacts with myxoma virus protein M11L. (Microbial infection) Interacts with Epstein-Barr virus protein BALF1. As to quaternary structure, (Microbial infection) Interacts with adenovirus protein E1B 19K. As to expression, expressed in a wide variety of tissues, with highest levels in the heart and skeletal muscle.

The protein localises to the mitochondrion outer membrane. Functionally, plays a role in the mitochondrial apoptotic process. Upon arrival of cell death signals, promotes mitochondrial outer membrane (MOM) permeabilization by oligomerizing to form pores within the MOM. This releases apoptogenic factors into the cytosol, including cytochrome c, promoting the activation of caspase 9 which in turn processes and activates the effector caspases. This chain is Bcl-2 homologous antagonist/killer (BAK1), found in Homo sapiens (Human).